The sequence spans 477 residues: D-alanyl-D-alanine carboxypeptidase DacB (477 aa).

The first 20 residues, 1–20, serve as a signal peptide directing secretion; it reads MRFSRFIIGLTSCIAFSVQA. The active-site Acyl-ester intermediate is S62. K65 acts as the Proton acceptor in catalysis. The interval 90–263 is absent in class-A beta-lactamases; that stretch reads GNVENGVLKG…YAGAILKDEL (174 aa). S306 is a catalytic residue. Position 417 (K417) interacts with substrate.

Belongs to the peptidase S13 family.

The protein localises to the periplasm. It carries out the reaction Preferential cleavage: (Ac)2-L-Lys-D-Ala-|-D-Ala. Also transpeptidation of peptidyl-alanyl moieties that are N-acyl substituents of D-alanine.. The protein operates within cell wall biogenesis; peptidoglycan biosynthesis. In terms of biological role, not involved in transpeptidation but exclusively catalyzes a DD-carboxypeptidase and DD-endopeptidase reaction. The protein is D-alanyl-D-alanine carboxypeptidase DacB (dacB) of Escherichia coli (strain K12).